A 223-amino-acid polypeptide reads, in one-letter code: Pyridoxine/pyridoxamine 5'-phosphate oxidase (223 aa).

Substrate-binding positions include 8–11 (RVDY) and lysine 65. FMN contacts are provided by residues 60–65 (RTVLLK), 75–76 (YT), arginine 81, lysine 82, and glutamine 104. Tyrosine 122, arginine 126, and serine 130 together coordinate substrate. FMN is bound by residues 139 to 140 (QS) and tryptophan 188. 194-196 (RLH) serves as a coordination point for substrate. An FMN-binding site is contributed by arginine 198.

The protein belongs to the pyridoxamine 5'-phosphate oxidase family. As to quaternary structure, homodimer. FMN is required as a cofactor.

The catalysed reaction is pyridoxamine 5'-phosphate + O2 + H2O = pyridoxal 5'-phosphate + H2O2 + NH4(+). The enzyme catalyses pyridoxine 5'-phosphate + O2 = pyridoxal 5'-phosphate + H2O2. It participates in cofactor metabolism; pyridoxal 5'-phosphate salvage; pyridoxal 5'-phosphate from pyridoxamine 5'-phosphate: step 1/1. Its pathway is cofactor metabolism; pyridoxal 5'-phosphate salvage; pyridoxal 5'-phosphate from pyridoxine 5'-phosphate: step 1/1. In terms of biological role, catalyzes the oxidation of either pyridoxine 5'-phosphate (PNP) or pyridoxamine 5'-phosphate (PMP) into pyridoxal 5'-phosphate (PLP). This chain is Pyridoxine/pyridoxamine 5'-phosphate oxidase, found in Kineococcus radiotolerans (strain ATCC BAA-149 / DSM 14245 / SRS30216).